A 270-amino-acid chain; its full sequence is Structure-specific endonuclease subunit SLX1 (270 aa).

The GIY-YIG domain maps to 9–94 (RFFGVYLLYC…PQASRRLTHV (86 aa)). An SLX1-type zinc finger spans residues 182–234 (CSLCARLLQDEEGPLCCPHPGCPLRAHIICLAEEFLQEEPGQLLPLEGHCPSC).

Belongs to the SLX1 family. Forms a heterodimer with SLX4. Requires a divalent metal cation as cofactor. Expressed in testis, colon, bone marrow, brain, thymus and to a lesser extent in heart, kidney, skeletal muscle and spleen.

The protein resides in the nucleus. Functionally, catalytic subunit of the SLX1-SLX4 structure-specific endonuclease that resolves DNA secondary structures generated during DNA repair and recombination. Has endonuclease activity towards branched DNA substrates, introducing single-strand cuts in duplex DNA close to junctions with ss-DNA. Has a preference for 5'-flap structures, and promotes symmetrical cleavage of static and migrating Holliday junctions (HJs). Resolves HJs by generating two pairs of ligatable, nicked duplex products. This chain is Structure-specific endonuclease subunit SLX1 (Slx1b), found in Mus musculus (Mouse).